A 250-amino-acid chain; its full sequence is 5'-nucleotidase SurE (250 aa).

A divalent metal cation-binding residues include D9, D10, S40, and N92.

Belongs to the SurE nucleotidase family. Requires a divalent metal cation as cofactor.

It localises to the cytoplasm. It carries out the reaction a ribonucleoside 5'-phosphate + H2O = a ribonucleoside + phosphate. Functionally, nucleotidase that shows phosphatase activity on nucleoside 5'-monophosphates. This is 5'-nucleotidase SurE from Shewanella pealeana (strain ATCC 700345 / ANG-SQ1).